Consider the following 847-residue polypeptide: Glucans biosynthesis glucosyltransferase H (847 aa).

Residues 1–139 (MNKTTEYIDA…WRTVGTIRRY (139 aa)) lie on the Cytoplasmic side of the membrane. A helical transmembrane segment spans residues 140–160 (ILLILTLAQTVVATWYMKTIL). The Periplasmic portion of the chain corresponds to 161-193 (PYQGWALINPMDMVGQDLWVSFMQLLPYMLQTG). The helical transmembrane segment at 194–214 (ILILFAVLFCWVSAGFWTALM) threads the bilayer. At 215–512 (GFLQLLIGRD…VKGMHPVHRA (298 aa)) the chain is on the cytoplasmic side. A helical membrane pass occupies residues 513–533 (VFLTGVMSYLSAPLWFMFLAL). Topologically, residues 534 to 569 (STALQVVHALTEPQYFLQPRQLFPVWPQWRPELAIA) are periplasmic. Residues 570 to 590 (LFASTMVLLFLPKLLSILLIW) traverse the membrane as a helical segment. At 591-602 (CKGTKEYGGFWR) the chain is on the cytoplasmic side. A helical transmembrane segment spans residues 603–625 (VTLSLLLEVLFSVLLAPVRMLFH). Topologically, residues 626 to 679 (TVFVVSAFLGWEVVWNSPQRDDDSTSWGEAFKRHGSQLLLGLVWAVGMAWLDLR) are periplasmic. Residues 680–700 (FLFWLAPIVFSLILSPFVSVI) form a helical membrane-spanning segment. Residues 701-847 (SSRATVGLRT…ALRKPDAASQ (147 aa)) are Cytoplasmic-facing.

This sequence belongs to the glycosyltransferase 2 family. OpgH subfamily.

The protein localises to the cell inner membrane. The protein operates within glycan metabolism; osmoregulated periplasmic glucan (OPG) biosynthesis. In terms of biological role, involved in the biosynthesis of osmoregulated periplasmic glucans (OPGs). In Shigella flexneri, this protein is Glucans biosynthesis glucosyltransferase H (mdoH).